We begin with the raw amino-acid sequence, 423 residues long: CinA-like protein (423 aa).

Belongs to the CinA family.

This Synechococcus sp. (strain CC9311) protein is CinA-like protein.